Here is a 94-residue protein sequence, read N- to C-terminus: Translation initiation factor 1A 2 (94 aa).

The 75-residue stretch at 6–80 (GRRNLRMPSD…EKANIEWRYS (75 aa)) folds into the S1-like domain.

It belongs to the eIF-1A family.

In terms of biological role, seems to be required for maximal rate of protein biosynthesis. Enhances ribosome dissociation into subunits and stabilizes the binding of the initiator Met-tRNA(I) to 40 S ribosomal subunits. This Haloquadratum walsbyi (strain DSM 16790 / HBSQ001) protein is Translation initiation factor 1A 2.